Consider the following 504-residue polypeptide: Maturase K (504 aa).

It belongs to the intron maturase 2 family. MatK subfamily.

The protein resides in the plastid. The protein localises to the chloroplast. In terms of biological role, usually encoded in the trnK tRNA gene intron. Probably assists in splicing its own and other chloroplast group II introns. In Adenostoma fasciculatum (Chamise), this protein is Maturase K.